Here is a 389-residue protein sequence, read N- to C-terminus: Acetylornithine deacetylase (389 aa).

Histidine 85 is a Zn(2+) binding site. Residue aspartate 87 is part of the active site. Aspartate 117 is a Zn(2+) binding site. Glutamate 149 is an active-site residue. 3 residues coordinate Zn(2+): glutamate 150, glutamate 174, and histidine 360.

Belongs to the peptidase M20A family. ArgE subfamily. Homodimer. Zn(2+) is required as a cofactor. It depends on Co(2+) as a cofactor. Glutathione serves as cofactor.

The protein localises to the cytoplasm. The enzyme catalyses N(2)-acetyl-L-ornithine + H2O = L-ornithine + acetate. Its pathway is amino-acid biosynthesis; L-arginine biosynthesis; L-ornithine from N(2)-acetyl-L-ornithine (linear): step 1/1. Catalyzes the hydrolysis of the amide bond of N(2)-acetylated L-amino acids. Cleaves the acetyl group from N-acetyl-L-ornithine to form L-ornithine, an intermediate in L-arginine biosynthesis pathway, and a branchpoint in the synthesis of polyamines. In Yersinia pseudotuberculosis serotype O:1b (strain IP 31758), this protein is Acetylornithine deacetylase.